We begin with the raw amino-acid sequence, 383 residues long: TnpB-like protein ORF383B (383 aa).

Positions 328, 331, 345, and 348 each coordinate Zn(2+).

It in the N-terminal section; belongs to the transposase 2 family. The protein in the C-terminal section; belongs to the transposase 35 family.

This Acidianus convivator (ATV) protein is TnpB-like protein ORF383B.